The following is a 101-amino-acid chain: Ubiquitin-related modifier 1 (101 aa).

Glycine 101 is modified (1-thioglycine). Glycine 101 participates in a covalent cross-link: Glycyl lysine isopeptide (Gly-Lys) (interchain with K-? in acceptor proteins).

Belongs to the URM1 family. Component of a complex at least composed of URM1, CTU2/NCS2 and CTU1/ATPBD3. Post-translationally, C-terminal thiocarboxylation occurs in 2 steps, it is first acyl-adenylated (-COAMP) via the hesA/moeB/thiF part of MOCS3, then thiocarboxylated (-COSH) via the rhodanese domain of MOCS3.

Its subcellular location is the cytoplasm. The protein operates within tRNA modification; 5-methoxycarbonylmethyl-2-thiouridine-tRNA biosynthesis. Its function is as follows. Acts as a sulfur carrier required for 2-thiolation of mcm(5)S(2)U at tRNA wobble positions of cytosolic tRNA(Lys), tRNA(Glu) and tRNA(Gln). Serves as sulfur donor in tRNA 2-thiolation reaction by being thiocarboxylated (-COSH) at its C-terminus by MOCS3. The sulfur is then transferred to tRNA to form 2-thiolation of mcm(5)S(2)U. Also acts as a ubiquitin-like protein (UBL) that is covalently conjugated via an isopeptide bond to lysine residues of target proteins such as MOCS3, ATPBD3, CTU2, USP15 and CAS. The thiocarboxylated form serves as substrate for conjugation and oxidative stress specifically induces the formation of UBL-protein conjugates. In Bos taurus (Bovine), this protein is Ubiquitin-related modifier 1.